Here is a 369-residue protein sequence, read N- to C-terminus: Olfactory receptor 2T1 (369 aa).

At 1-76 the chain is on the extracellular side; sequence MWQEYYFLNV…LFNRKETSGL (76 aa). N-linked (GlcNAc...) asparagine glycosylation occurs at Asn-56. Residues 77–97 form a helical membrane-spanning segment; sequence IFAIISIIFFTALMANGVMIF. The Cytoplasmic segment spans residues 98–107; that stretch reads LIQTDLRLHT. A helical membrane pass occupies residues 108 to 128; it reads PMYFLLSHLSLIDMMYISTIV. Over 129–148 the chain is Extracellular; the sequence is PKMLVNYLLDQRTISFVGCT. Cys-147 and Cys-239 form a disulfide bridge. A helical membrane pass occupies residues 149–169; it reads AQHFLYLTLVGAEFFLLGLMA. The Cytoplasmic segment spans residues 170 to 191; that stretch reads YDRYVAICNPLRYPVLMSRRVC. A helical transmembrane segment spans residues 192–212; that stretch reads WMIIAGSWFGGSLDGFLLTPI. At 213–247 the chain is on the extracellular side; sequence TMSFPFCNSREINHFFCEAPAVLKLACADTALYET. Residues 248–268 form a helical membrane-spanning segment; that stretch reads VMYVCCVLMLLIPFSVVLASY. Residues 269-286 are Cytoplasmic-facing; it reads ARILTTVQCMSSVEGRKK. Residues 287–307 traverse the membrane as a helical segment; that stretch reads AFATCSSHMTVVSLFYGAAMY. Residues 308–321 lie on the Extracellular side of the membrane; it reads TYMLPHSYHKPAQD. The chain crosses the membrane as a helical span at residues 322–342; that stretch reads KVLSVFYTILTPMLNPLIYSL. Residues 343–369 are Cytoplasmic-facing; it reads RNKDVTGALKRALGRFKGPQRVSGGVF.

This sequence belongs to the G-protein coupled receptor 1 family.

The protein resides in the cell membrane. Its function is as follows. Odorant receptor. This chain is Olfactory receptor 2T1 (OR2T1), found in Homo sapiens (Human).